The chain runs to 433 residues: UPF0761 membrane protein Sde_0901 (433 aa).

6 helical membrane passes run Leu-46 to Phe-66, Leu-103 to Glu-123, Phe-142 to Met-162, Phe-185 to Val-205, Ile-217 to Val-237, and Gly-247 to Leu-267.

The protein belongs to the UPF0761 family.

Its subcellular location is the cell inner membrane. This Saccharophagus degradans (strain 2-40 / ATCC 43961 / DSM 17024) protein is UPF0761 membrane protein Sde_0901.